Here is a 137-residue protein sequence, read N- to C-terminus: Small ribosomal subunit protein bS18c (137 aa).

This sequence belongs to the bacterial ribosomal protein bS18 family. As to quaternary structure, part of the 30S ribosomal subunit.

It is found in the plastid. It localises to the chloroplast. This chain is Small ribosomal subunit protein bS18c (rps18), found in Chlamydomonas reinhardtii (Chlamydomonas smithii).